The primary structure comprises 162 residues: MVMLHSKNVKGFLENTLKPYDLHSVDFKTSSLQSSMIITATNGGILSYATSNNDVPKNSINEINSVNNLKMMSLLIKDKWSEDENDTEEQHSNSCYPVEIDSFKTKIYTYEMEDLHTCVAQIPNSDLLLLFIAEGSFPYGLLVIKIERAMRELTDLFGYKLG.

A helical membrane pass occupies residues 127–144 (LLLLFIAEGSFPYGLLVI).

In terms of assembly, component of the GSE complex composed of GTR1, GTR2, SLM4, MEH1 and LTV1. Component of the EGO complex, at least composed of GTR2, SLM4 and MEH1.

The protein localises to the vacuole membrane. Its function is as follows. Component of the GSE complex, a GTPase complex required for intracellular sorting of GAP1 out of the endosome. Component of the EGO complex, a complex involved in the regulation of microautophagy. This chain is Protein SLM4 (SLM4), found in Saccharomyces cerevisiae (strain ATCC 204508 / S288c) (Baker's yeast).